We begin with the raw amino-acid sequence, 122 residues long: Large ribosomal subunit protein uL14 (122 aa).

The protein belongs to the universal ribosomal protein uL14 family. Part of the 50S ribosomal subunit. Forms a cluster with proteins L3 and L19. In the 70S ribosome, L14 and L19 interact and together make contacts with the 16S rRNA in bridges B5 and B8.

In terms of biological role, binds to 23S rRNA. Forms part of two intersubunit bridges in the 70S ribosome. This Rhizobium meliloti (strain 1021) (Ensifer meliloti) protein is Large ribosomal subunit protein uL14.